A 495-amino-acid chain; its full sequence is UDP-N-acetylmuramoyl-L-alanyl-D-glutamate--2,6-diaminopimelate ligase (495 aa).

UDP-N-acetyl-alpha-D-muramoyl-L-alanyl-D-glutamate contacts are provided by residues L27, S29, and 44–46; that span reads HQA. Residue 116–122 coordinates ATP; sequence GTNGKTT. UDP-N-acetyl-alpha-D-muramoyl-L-alanyl-D-glutamate is bound by residues N157, 158–159, S185, Q191, and R193; that span reads TT. K225 is subject to N6-carboxylysine. Meso-2,6-diaminopimelate contacts are provided by residues R390, 414-417, G465, and E469; that span reads DNPR. Positions 414-417 match the Meso-diaminopimelate recognition motif motif; the sequence is DNPR.

This sequence belongs to the MurCDEF family. MurE subfamily. It depends on Mg(2+) as a cofactor. In terms of processing, carboxylation is probably crucial for Mg(2+) binding and, consequently, for the gamma-phosphate positioning of ATP.

Its subcellular location is the cytoplasm. It carries out the reaction UDP-N-acetyl-alpha-D-muramoyl-L-alanyl-D-glutamate + meso-2,6-diaminopimelate + ATP = UDP-N-acetyl-alpha-D-muramoyl-L-alanyl-gamma-D-glutamyl-meso-2,6-diaminopimelate + ADP + phosphate + H(+). The protein operates within cell wall biogenesis; peptidoglycan biosynthesis. Catalyzes the addition of meso-diaminopimelic acid to the nucleotide precursor UDP-N-acetylmuramoyl-L-alanyl-D-glutamate (UMAG) in the biosynthesis of bacterial cell-wall peptidoglycan. The sequence is that of UDP-N-acetylmuramoyl-L-alanyl-D-glutamate--2,6-diaminopimelate ligase from Salmonella paratyphi A (strain ATCC 9150 / SARB42).